A 267-amino-acid polypeptide reads, in one-letter code: DNA repair protein RecO (267 aa).

This sequence belongs to the RecO family.

Its function is as follows. Involved in DNA repair and RecF pathway recombination. The protein is DNA repair protein RecO of Prochlorococcus marinus (strain MIT 9303).